The chain runs to 401 residues: tRNA(Met) cytidine acetate ligase (401 aa).

Residues 7–20 (IVEYNPFHNGHLYH), Gly101, Asn160, and 185–186 (RI) contribute to the ATP site.

It belongs to the TmcAL family.

The protein resides in the cytoplasm. It catalyses the reaction cytidine(34) in elongator tRNA(Met) + acetate + ATP = N(4)-acetylcytidine(34) in elongator tRNA(Met) + AMP + diphosphate. Functionally, catalyzes the formation of N(4)-acetylcytidine (ac(4)C) at the wobble position of elongator tRNA(Met), using acetate and ATP as substrates. First activates an acetate ion to form acetyladenylate (Ac-AMP) and then transfers the acetyl group to tRNA to form ac(4)C34. This Geobacillus sp. (strain WCH70) protein is tRNA(Met) cytidine acetate ligase.